Here is an 880-residue protein sequence, read N- to C-terminus: Leucine-rich repeat-containing protein 66 (880 aa).

The helical transmembrane segment at 4–24 threads the bilayer; the sequence is LYFRVITIVIGLYFTGIMTNA. An N-linked (GlcNAc...) asparagine glycan is attached at Asn-45. LRR repeat units lie at residues 86–107, 110–130, 149–171, 172–193, 196–217, and 220–241; these read KIKH…PFAY, ALEV…DLLS, LLKV…WKLK, SLQS…DFHN, QLEN…AFKD, and KLQV…MIIA. Residue Asn-115 is glycosylated (N-linked (GlcNAc...) asparagine). The segment at 319 to 368 is disordered; that stretch reads SKAERPQGGRHTGISTLGKKAKAGSGLRKKQRRLPRSVRSTRDVQAAGKK. Residues 337–354 show a composition bias toward basic residues; it reads KKAKAGSGLRKKQRRLPR. The chain crosses the membrane as a helical span at residues 376-396; that stretch reads ALAVCLSVFITFLVAFSLGAF. 2 disordered regions span residues 463 to 504 and 679 to 746; these read PHPH…NDGA and VTPA…SKDN. Residues 483–493 show a composition bias toward polar residues; that stretch reads GSSQSPGQCGD. Residues 697–707 show a composition bias toward acidic residues; it reads CELESDCDSDE. A compositionally biased stretch (low complexity) spans 709-720; it reads SLFTLSSISSES. Residue Ser-723 is modified to Phosphoserine. Polar residues predominate over residues 737–746; sequence DESSGASKDN. An N-linked (GlcNAc...) asparagine glycan is attached at Asn-746. Ser-752 carries the post-translational modification Phosphoserine. Asn-756 carries an N-linked (GlcNAc...) asparagine glycan. 2 disordered regions span residues 764–816 and 855–880; these read GKCK…PLGD and TPPC…DILK. Basic and acidic residues-rich tracts occupy residues 788 to 800 and 865 to 880; these read THLE…DRSE and DPDK…DILK.

Its subcellular location is the membrane. The chain is Leucine-rich repeat-containing protein 66 (LRRC66) from Homo sapiens (Human).